A 261-amino-acid chain; its full sequence is CD40 ligand (261 aa).

Residues 1–22 (MIETYNQPVPRSAATGPPVSMK) are Cytoplasmic-facing. A helical; Signal-anchor for type II membrane protein transmembrane segment spans residues 23–43 (IFMYLLTVFLITQMIGSALFA). Residues 44–261 (VYLHRRLDKI…GFTSFGLLKL (218 aa)) are Extracellular-facing. A THD domain is found at 122 to 261 (IAAHVISEAS…GFTSFGLLKL (140 aa)). A disulfide bridge links cysteine 178 with cysteine 218. Asparagine 240 carries N-linked (GlcNAc...) asparagine glycosylation.

This sequence belongs to the tumor necrosis factor family. In terms of assembly, homotrimer. Interacts with CD28. CD40 ligand, soluble form: Exists as either a monomer or a homotrimer. Forms a ternary complex between CD40 and integrins for CD40-CD40LG signaling. The soluble form derives from the membrane form by proteolytic processing.

It localises to the cell membrane. The protein resides in the cell surface. It is found in the secreted. In terms of biological role, cytokine that acts as a ligand to CD40/TNFRSF5. Costimulates T-cell proliferation and cytokine production. Its cross-linking on T-cells generates a costimulatory signal which enhances the production of IL4 and IL10 in conjunction with the TCR/CD3 ligation and CD28 costimulation. Induces the activation of NF-kappa-B. Induces the activation of kinases MAPK8 and PAK2 in T-cells. Mediates B-cell proliferation in the absence of co-stimulus as well as IgE production in the presence of IL4. Involved in immunoglobulin class switching. Its function is as follows. Acts as a ligand for integrins, specifically ITGA5:ITGB1 and ITGAV:ITGB3; both integrins and the CD40 receptor are required for activation of CD40-CD40LG signaling, which have cell-type dependent effects, such as B-cell activation, NF-kappa-B signaling and anti-apoptotic signaling. This is CD40 ligand (CD40LG) from Callithrix jacchus (White-tufted-ear marmoset).